The following is a 410-amino-acid chain: Elongation factor Tu, chloroplastic (410 aa).

Residues lysine 10–glutamine 215 enclose the tr-type G domain. Residues glycine 19 to threonine 26 form a G1 region. Glycine 19–threonine 26 provides a ligand contact to GTP. Threonine 26 contacts Mg(2+). Residues glycine 61–asparagine 65 form a G2 region. The interval aspartate 82–glycine 85 is G3. Residues aspartate 82–histidine 86 and asparagine 137–aspartate 140 each bind GTP. The segment at asparagine 137–aspartate 140 is G4. The G5 stretch occupies residues serine 175–leucine 177.

Belongs to the TRAFAC class translation factor GTPase superfamily. Classic translation factor GTPase family. EF-Tu/EF-1A subfamily.

The protein localises to the plastid. Its subcellular location is the chloroplast. The enzyme catalyses GTP + H2O = GDP + phosphate + H(+). In terms of biological role, GTP hydrolase that promotes the GTP-dependent binding of aminoacyl-tRNA to the A-site of ribosomes during protein biosynthesis. The polypeptide is Elongation factor Tu, chloroplastic (tufA) (Cyanidioschyzon merolae (strain NIES-3377 / 10D) (Unicellular red alga)).